The primary structure comprises 86 residues: Small ribosomal subunit protein bS20 (86 aa).

The tract at residues 1–22 (MANIASARKRARQAEKNRQHNM) is disordered.

It belongs to the bacterial ribosomal protein bS20 family.

Functionally, binds directly to 16S ribosomal RNA. The chain is Small ribosomal subunit protein bS20 from Thioalkalivibrio sulfidiphilus (strain HL-EbGR7).